The primary structure comprises 277 residues: Probable endonuclease 4 (277 aa).

Zn(2+) is bound by residues H67, H107, E141, D173, H176, H207, D220, H222, and E252.

This sequence belongs to the AP endonuclease 2 family. Requires Zn(2+) as cofactor.

It catalyses the reaction Endonucleolytic cleavage to 5'-phosphooligonucleotide end-products.. In terms of biological role, endonuclease IV plays a role in DNA repair. It cleaves phosphodiester bonds at apurinic or apyrimidinic (AP) sites, generating a 3'-hydroxyl group and a 5'-terminal sugar phosphate. In Finegoldia magna (strain ATCC 29328 / DSM 20472 / WAL 2508) (Peptostreptococcus magnus), this protein is Probable endonuclease 4.